Reading from the N-terminus, the 270-residue chain is Transmembrane protein 176B (270 aa).

The next 4 membrane-spanning stretches (helical) occupy residues Leu-65–Leu-85, Ala-95–Val-115, Ile-127–Val-147, and Leu-209–Leu-229. Phosphoserine occurs at positions 236, 245, 254, and 258. The disordered stretch occupies residues Ser-237–Leu-270. A compositionally biased stretch (polar residues) spans Ser-260–Leu-270.

It belongs to the TMEM176 family. In terms of tissue distribution, expressed in lung and dermal fibroblasts.

Its subcellular location is the nucleus membrane. May play a role in the process of maturation of dendritic cells. Required for the development of cerebellar granule cells. In Homo sapiens (Human), this protein is Transmembrane protein 176B (TMEM176B).